The primary structure comprises 363 residues: Ribosomal RNA large subunit methyltransferase M (363 aa).

Residues Ser194, 227 to 230 (CPGG), Asp246, Asp266, and Asp284 contribute to the S-adenosyl-L-methionine site. The Proton acceptor role is filled by Lys313.

Belongs to the class I-like SAM-binding methyltransferase superfamily. RNA methyltransferase RlmE family. RlmM subfamily. As to quaternary structure, monomer.

It is found in the cytoplasm. The catalysed reaction is cytidine(2498) in 23S rRNA + S-adenosyl-L-methionine = 2'-O-methylcytidine(2498) in 23S rRNA + S-adenosyl-L-homocysteine + H(+). In terms of biological role, catalyzes the 2'-O-methylation at nucleotide C2498 in 23S rRNA. The chain is Ribosomal RNA large subunit methyltransferase M from Haemophilus influenzae (strain 86-028NP).